Consider the following 129-residue polypeptide: M-zodatoxin-Lt8k (129 aa).

The N-terminal stretch at 1 to 20 (MKYFVVALALVAAFACIAES) is a signal peptide. A propeptide spanning residues 21 to 60 (KPAESEHELAEVEEENELADLEDAVWLEHLADLSDLEEAR) is cleaved from the precursor.

This sequence belongs to the cationic peptide 06 (cytoinsectotoxin) family. In terms of tissue distribution, expressed by the venom gland.

Its subcellular location is the secreted. In terms of biological role, insecticidal, cytolytic and antimicrobial peptide. Forms voltage-dependent, ion-permeable channels in membranes. At high concentration causes cell membrane lysis. This Lachesana tarabaevi (Spider) protein is M-zodatoxin-Lt8k (cit 1-10).